Reading from the N-terminus, the 175-residue chain is EKC/KEOPS complex subunit TPRKB (175 aa).

Belongs to the CGI121/TPRKB family. In terms of assembly, component of the EKC/KEOPS complex.

It is found in the cytoplasm. The protein resides in the cytosol. It localises to the nucleus. Functionally, component of the EKC/KEOPS complex that is required for the formation of a threonylcarbamoyl group on adenosine at position 37 (t(6)A37) in tRNAs that read codons beginning with adenine. The complex is probably involved in the transfer of the threonylcarbamoyl moiety of threonylcarbamoyl-AMP (TC-AMP) to the N6 group of A37. Tprkb acts as an allosteric effector that regulates the t(6)A activity of the complex. This chain is EKC/KEOPS complex subunit TPRKB, found in Danio rerio (Zebrafish).